The chain runs to 276 residues: Homeobox-leucine zipper protein HOX11 (276 aa).

A disordered region spans residues Met1 to Leu92. Residues Leu39–Gly48 are compositionally biased toward polar residues. A compositionally biased stretch (gly residues) spans His58–Asp73. A DNA-binding region (homeobox) is located at residues Ser87–Gln146. The interval Lys145–Pro189 is leucine-zipper. The segment at Ala214–Ala244 is disordered.

It belongs to the HD-ZIP homeobox family. Class II subfamily. Expressed in stems, leaf sheaths and blades and panicles.

The protein resides in the nucleus. Probable transcription factor. In Oryza sativa subsp. indica (Rice), this protein is Homeobox-leucine zipper protein HOX11 (HOX11).